Consider the following 241-residue polypeptide: Leucyl/phenylalanyl-tRNA--protein transferase (241 aa).

The protein belongs to the L/F-transferase family.

The protein localises to the cytoplasm. It catalyses the reaction N-terminal L-lysyl-[protein] + L-leucyl-tRNA(Leu) = N-terminal L-leucyl-L-lysyl-[protein] + tRNA(Leu) + H(+). The catalysed reaction is N-terminal L-arginyl-[protein] + L-leucyl-tRNA(Leu) = N-terminal L-leucyl-L-arginyl-[protein] + tRNA(Leu) + H(+). The enzyme catalyses L-phenylalanyl-tRNA(Phe) + an N-terminal L-alpha-aminoacyl-[protein] = an N-terminal L-phenylalanyl-L-alpha-aminoacyl-[protein] + tRNA(Phe). In terms of biological role, functions in the N-end rule pathway of protein degradation where it conjugates Leu, Phe and, less efficiently, Met from aminoacyl-tRNAs to the N-termini of proteins containing an N-terminal arginine or lysine. This is Leucyl/phenylalanyl-tRNA--protein transferase from Neisseria meningitidis serogroup A / serotype 4A (strain DSM 15465 / Z2491).